Reading from the N-terminus, the 499-residue chain is Putative DBH-like monooxygenase protein 2 (499 aa).

The N-terminal stretch at 1–16 (MAHDLLFRLFPLLALG) is a signal peptide. Positions 40–156 (NVIFLRWDFD…NTVRVLAAYG (117 aa)) constitute a DOMON domain. Tyrosine 209 is an active-site residue. Intrachain disulfides connect cysteine 211/cysteine 261 and cysteine 248/cysteine 271. A glycan (N-linked (GlcNAc...) asparagine) is linked at asparagine 236. The Cu cation site is built by histidine 241 and histidine 242. An N-linked (GlcNAc...) asparagine glycan is attached at asparagine 250. Histidine 308, histidine 389, and histidine 391 together coordinate Cu cation. Cystine bridges form between cysteine 365–cysteine 480 and cysteine 443–cysteine 465. Residue histidine 389 is part of the active site. An N-linked (GlcNAc...) asparagine glycan is attached at asparagine 404. Residue methionine 464 coordinates Cu cation. N-linked (GlcNAc...) asparagine glycosylation occurs at asparagine 476.

It belongs to the copper type II ascorbate-dependent monooxygenase family. Requires Cu(2+) as cofactor.

This Homo sapiens (Human) protein is Putative DBH-like monooxygenase protein 2 (MOXD2P).